The chain runs to 89 residues: MNVSYIAHISGRVQGVYFRASSQQQAIEYSLSGYARNLADGDVEVLLCGDEENIEKMLLWLAHGPEQAKVTEIQHEKVPWQEHHFFSIG.

Residues 4-89 (SYIAHISGRV…WQEHHFFSIG (86 aa)) enclose the Acylphosphatase-like domain. Catalysis depends on residues Arg-19 and Asn-37.

The protein belongs to the acylphosphatase family.

The catalysed reaction is an acyl phosphate + H2O = a carboxylate + phosphate + H(+). This chain is Acylphosphatase (acyP), found in Colwellia psychrerythraea (strain 34H / ATCC BAA-681) (Vibrio psychroerythus).